We begin with the raw amino-acid sequence, 290 residues long: Diaminopimelate epimerase (290 aa).

Residues asparagine 11 and asparagine 78 each coordinate substrate. The Proton donor role is filled by cysteine 87. Substrate is bound by residues 88-89 (GN), asparagine 163, asparagine 199, and 217-218 (ER). The active-site Proton acceptor is the cysteine 226. Substrate is bound at residue 227-228 (GT).

The protein belongs to the diaminopimelate epimerase family. Homodimer.

Its subcellular location is the cytoplasm. The catalysed reaction is (2S,6S)-2,6-diaminopimelate = meso-2,6-diaminopimelate. It functions in the pathway amino-acid biosynthesis; L-lysine biosynthesis via DAP pathway; DL-2,6-diaminopimelate from LL-2,6-diaminopimelate: step 1/1. Its function is as follows. Catalyzes the stereoinversion of LL-2,6-diaminopimelate (L,L-DAP) to meso-diaminopimelate (meso-DAP), a precursor of L-lysine and an essential component of the bacterial peptidoglycan. This chain is Diaminopimelate epimerase, found in Mycobacterium ulcerans (strain Agy99).